The following is a 317-amino-acid chain: Porphobilinogen deaminase (317 aa).

Cys-245 carries the post-translational modification S-(dipyrrolylmethanemethyl)cysteine.

This sequence belongs to the HMBS family. As to quaternary structure, monomer. It depends on dipyrromethane as a cofactor.

It catalyses the reaction 4 porphobilinogen + H2O = hydroxymethylbilane + 4 NH4(+). It functions in the pathway porphyrin-containing compound metabolism; protoporphyrin-IX biosynthesis; coproporphyrinogen-III from 5-aminolevulinate: step 2/4. The protein operates within porphyrin-containing compound metabolism; chlorophyll biosynthesis. In terms of biological role, tetrapolymerization of the monopyrrole PBG into the hydroxymethylbilane pre-uroporphyrinogen in several discrete steps. The chain is Porphobilinogen deaminase from Parasynechococcus marenigrum (strain WH8102).